Reading from the N-terminus, the 419-residue chain is Glucose-1-phosphate adenylyltransferase (419 aa).

Alpha-D-glucose 1-phosphate contacts are provided by residues Tyr-107, Gly-172, 187-188 (EK), and Ser-205.

It belongs to the bacterial/plant glucose-1-phosphate adenylyltransferase family. As to quaternary structure, homotetramer.

It catalyses the reaction alpha-D-glucose 1-phosphate + ATP + H(+) = ADP-alpha-D-glucose + diphosphate. It participates in glycan biosynthesis; glycogen biosynthesis. Functionally, involved in the biosynthesis of ADP-glucose, a building block required for the elongation reactions to produce glycogen. Catalyzes the reaction between ATP and alpha-D-glucose 1-phosphate (G1P) to produce pyrophosphate and ADP-Glc. This Novosphingobium aromaticivorans (strain ATCC 700278 / DSM 12444 / CCUG 56034 / CIP 105152 / NBRC 16084 / F199) protein is Glucose-1-phosphate adenylyltransferase.